Reading from the N-terminus, the 84-residue chain is Sec-independent protein translocase protein TatA (84 aa).

The chain crosses the membrane as a helical span at residues 1 to 21; it reads MGGFSIWHWLIVLLIVVMVFG. Positions 40 to 84 are disordered; the sequence is KDGMKDGGQSPADEKPVVPASQVTNAQAADKAERNTIDVEARQKS. The span at 69–84 shows a compositional bias: basic and acidic residues; the sequence is DKAERNTIDVEARQKS.

It belongs to the TatA/E family. The Tat system comprises two distinct complexes: a TatABC complex, containing multiple copies of TatA, TatB and TatC subunits, and a separate TatA complex, containing only TatA subunits. Substrates initially bind to the TatABC complex, which probably triggers association of the separate TatA complex to form the active translocon.

The protein resides in the cell inner membrane. Its function is as follows. Part of the twin-arginine translocation (Tat) system that transports large folded proteins containing a characteristic twin-arginine motif in their signal peptide across membranes. TatA could form the protein-conducting channel of the Tat system. The polypeptide is Sec-independent protein translocase protein TatA (Polaromonas naphthalenivorans (strain CJ2)).